Consider the following 421-residue polypeptide: Serine hydroxymethyltransferase (421 aa).

Residues L121 and 125 to 127 each bind (6S)-5,6,7,8-tetrahydrofolate; that span reads GHL. K230 carries the post-translational modification N6-(pyridoxal phosphate)lysine. (6S)-5,6,7,8-tetrahydrofolate contacts are provided by residues E246 and 354–356; that span reads SPF.

Belongs to the SHMT family. As to quaternary structure, homodimer. Pyridoxal 5'-phosphate is required as a cofactor.

It is found in the cytoplasm. It catalyses the reaction (6R)-5,10-methylene-5,6,7,8-tetrahydrofolate + glycine + H2O = (6S)-5,6,7,8-tetrahydrofolate + L-serine. It participates in one-carbon metabolism; tetrahydrofolate interconversion. The protein operates within amino-acid biosynthesis; glycine biosynthesis; glycine from L-serine: step 1/1. In terms of biological role, catalyzes the reversible interconversion of serine and glycine with tetrahydrofolate (THF) serving as the one-carbon carrier. This reaction serves as the major source of one-carbon groups required for the biosynthesis of purines, thymidylate, methionine, and other important biomolecules. Also exhibits THF-independent aldolase activity toward beta-hydroxyamino acids, producing glycine and aldehydes, via a retro-aldol mechanism. The sequence is that of Serine hydroxymethyltransferase from Rickettsia felis (strain ATCC VR-1525 / URRWXCal2) (Rickettsia azadi).